The sequence spans 457 residues: Multidrug resistance protein MdtK (457 aa).

12 helical membrane passes run 11–31 (LLAL…MGFV), 53–73 (IWLP…PVIA), 93–113 (WLAG…GYII), 127–147 (AVGY…FQVA), 160–180 (GMVI…IFIY), 188–208 (LGGV…FIAM), 243–263 (LPIA…ALLV), 276–296 (IALN…AAVT), 314–334 (AART…IFTV), 357–377 (LMLL…GSGI), 387–407 (IFFI…YILA), and 418–438 (PAGF…MMML).

It belongs to the multi antimicrobial extrusion (MATE) (TC 2.A.66.1) family. MdtK subfamily.

The protein resides in the cell inner membrane. Its function is as follows. Multidrug efflux pump that functions probably as a Na(+)/drug antiporter. The sequence is that of Multidrug resistance protein MdtK from Citrobacter koseri (strain ATCC BAA-895 / CDC 4225-83 / SGSC4696).